Reading from the N-terminus, the 276-residue chain is Diaminopimelate epimerase (276 aa).

3 residues coordinate substrate: Asn-13, Gln-46, and Asn-66. The active-site Proton donor is Cys-75. Substrate is bound by residues 76-77 (GN), Asn-159, Asn-192, and 210-211 (ER). The active-site Proton acceptor is Cys-219. 220-221 (GT) serves as a coordination point for substrate.

It belongs to the diaminopimelate epimerase family. As to quaternary structure, homodimer.

Its subcellular location is the cytoplasm. It catalyses the reaction (2S,6S)-2,6-diaminopimelate = meso-2,6-diaminopimelate. The protein operates within amino-acid biosynthesis; L-lysine biosynthesis via DAP pathway; DL-2,6-diaminopimelate from LL-2,6-diaminopimelate: step 1/1. In terms of biological role, catalyzes the stereoinversion of LL-2,6-diaminopimelate (L,L-DAP) to meso-diaminopimelate (meso-DAP), a precursor of L-lysine and an essential component of the bacterial peptidoglycan. This chain is Diaminopimelate epimerase, found in Pseudomonas entomophila (strain L48).